The following is a 985-amino-acid chain: Translation initiation factor IF-2 (985 aa).

3 stretches are compositionally biased toward basic and acidic residues: residues 49–58 (QYGKKQEKSS), 65–89 (IQRE…RPDN), and 99–113 (VPNR…DKAK). A disordered region spans residues 49 to 401 (QYGKKQEKSS…QQSAPPPILD (353 aa)). Positions 125–136 (SKTTTNSENEQT) are enriched in polar residues. Residues 137-162 (APRQGSAQQSGQGRPQANRPQGSQGR) are compositionally biased toward low complexity. Composition is skewed to gly residues over residues 180–246 (PQGG…GQGR) and 288–324 (PQGG…GAGR). Residues 349–377 (KAPDKTKGDRRKNYEKDGKWADGQIEKNK) show a composition bias toward basic and acidic residues. Positions 378–391 (LFKGRNNKNKKRQH) are enriched in basic residues. The region spanning 485-654 (LRPPVVTIMG…LLVAEVHELK (170 aa)) is the tr-type G domain. The tract at residues 494-501 (GHVDHGKT) is G1. GTP is bound at residue 494–501 (GHVDHGKT). Residues 519 to 523 (GITQH) are G2. Residues 540–543 (DTPG) form a G3 region. GTP-binding positions include 540–544 (DTPGH) and 594–597 (NKMD). A G4 region spans residues 594–597 (NKMD). The G5 stretch occupies residues 630 to 632 (SAK).

This sequence belongs to the TRAFAC class translation factor GTPase superfamily. Classic translation factor GTPase family. IF-2 subfamily.

The protein localises to the cytoplasm. Its function is as follows. One of the essential components for the initiation of protein synthesis. Protects formylmethionyl-tRNA from spontaneous hydrolysis and promotes its binding to the 30S ribosomal subunits. Also involved in the hydrolysis of GTP during the formation of the 70S ribosomal complex. The chain is Translation initiation factor IF-2 from Desulforamulus reducens (strain ATCC BAA-1160 / DSM 100696 / MI-1) (Desulfotomaculum reducens).